Here is a 250-residue protein sequence, read N- to C-terminus: Beta-crystallin B1 (250 aa).

The span at 1–13 shows a compositional bias: polar residues; it reads MSQAAKASATTAV. The disordered stretch occupies residues 1-49; the sequence is MSQAAKASATTAVNPGPDGKGKGAPSTGPAPAPGPTPVPASVPRPAAKV. Ser-2 is subject to N-acetylserine. Residues 2–56 are N-terminal arm; it reads SQAAKASATTAVNPGPDGKGKGAPSTGPAPAPGPTPVPASVPRPAAKVGDLPPGS. Positions 28 to 42 are enriched in pro residues; that stretch reads GPAPAPGPTPVPASV. 2 consecutive Beta/gamma crystallin 'Greek key' domains span residues 57–96 and 97–141; these read YRLI…IVVS and GPWV…RPIR. Residues 142-146 are connecting peptide; sequence MDSQE. Beta/gamma crystallin 'Greek key' domains lie at 147–188 and 189–231; these read HKIC…TVSG and GTWV…RRLR. The C-terminal arm stretch occupies residues 233 to 250; it reads RQWHQEGCFPVLTAEPPK.

It belongs to the beta/gamma-crystallin family. In terms of assembly, homo/heterodimer, or complexes of higher-order. The structure of beta-crystallin oligomers seems to be stabilized through interactions between the N-terminal arms. Post-translationally, specific cleavages in the N-terminal arm occur during lens maturation and give rise to truncated forms, leading to impaired oligomerization and protein insolubilization. The protease responsible for this partial degradation could be calpain II.

Crystallins are the dominant structural components of the vertebrate eye lens. This chain is Beta-crystallin B1 (Crybb1), found in Mus musculus (Mouse).